The chain runs to 279 residues: Acetyl-coenzyme A carboxylase carboxyl transferase subunit beta (279 aa).

Residues 23–279 form the CoA carboxyltransferase N-terminal domain; that stretch reads LWSKCDECGA…LIKLFKHLRG (257 aa). Zn(2+) is bound by residues Cys-27, Cys-30, Cys-46, and Cys-49. A C4-type zinc finger spans residues 27 to 49; sequence CDECGAALHKKQLEDHLYTCPEC.

The protein belongs to the AccD/PCCB family. As to quaternary structure, acetyl-CoA carboxylase is a heterohexamer composed of biotin carboxyl carrier protein (AccB), biotin carboxylase (AccC) and two subunits each of ACCase subunit alpha (AccA) and ACCase subunit beta (AccD). It depends on Zn(2+) as a cofactor.

It localises to the cytoplasm. The catalysed reaction is N(6)-carboxybiotinyl-L-lysyl-[protein] + acetyl-CoA = N(6)-biotinyl-L-lysyl-[protein] + malonyl-CoA. It functions in the pathway lipid metabolism; malonyl-CoA biosynthesis; malonyl-CoA from acetyl-CoA: step 1/1. Functionally, component of the acetyl coenzyme A carboxylase (ACC) complex. Biotin carboxylase (BC) catalyzes the carboxylation of biotin on its carrier protein (BCCP) and then the CO(2) group is transferred by the transcarboxylase to acetyl-CoA to form malonyl-CoA. In Chlorobaculum parvum (strain DSM 263 / NCIMB 8327) (Chlorobium vibrioforme subsp. thiosulfatophilum), this protein is Acetyl-coenzyme A carboxylase carboxyl transferase subunit beta.